Consider the following 509-residue polypeptide: 5-hydroxytryptamine receptor (509 aa).

Over 1 to 99 (MANFTFGDLA…YSHEHLVLTS (99 aa)) the chain is Extracellular. N3, N47, N58, N68, N72, and N78 each carry an N-linked (GlcNAc...) asparagine glycan. The helical transmembrane segment at 100 to 122 (VILGLFVLCCIIGNCFVIAAVML) threads the bilayer. Residues 123–132 (ERSLHNVANY) lie on the Cytoplasmic side of the membrane. Residues 133–154 (LILSLAVADLMVAVLVMPLSVV) form a helical membrane-spanning segment. The Extracellular segment spans residues 155-169 (SEISKVWFLHSEVCD). A disulfide bond links C168 and C246. Residues 170 to 191 (MWISVDVLCCTASILHLVAIAM) traverse the membrane as a helical segment. Residues 192-210 (DRYWAVTSIDYIRRRSARR) are Cytoplasmic-facing. A helical transmembrane segment spans residues 211-233 (ILLMIMVVWIVALFISIPPLFGW). Residues 234–259 (RDPNNDPDKTGTCIISQDKGYTIFST) lie on the Extracellular side of the membrane. The helical transmembrane segment at 260-281 (VGAFYLPMLVMMIIYIRIWLVA) threads the bilayer. Residues 282–432 (RSRIRKDKFQ…LKRERKAART (151 aa)) are Cytoplasmic-facing. The interval 323-372 (SPDSTTEKKKRRAPFKSYGCSPRPERKKNRAKKLPENANGVNSNSSSSER) is disordered. The helical transmembrane segment at 433 to 456 (LAIITGAFLICWLPFFIIALIGPF) threads the bilayer. At 457–465 (VDPEGIPPF) the chain is on the extracellular side. Residues 466-488 (ARSFVLWLGYFNSLLNPIIYTIF) form a helical membrane-spanning segment. Over 489-509 (SPEFRSAFQKILFGKYRRGHR) the chain is Cytoplasmic.

It belongs to the G-protein coupled receptor 1 family.

The protein localises to the cell membrane. This is a receptor for 5-hydroxytryptamine (serotonin), a biogenic hormone that function as a neurotransmitter, a hormone, and a mitogen. The sequence is that of 5-hydroxytryptamine receptor from Lymnaea stagnalis (Great pond snail).